The sequence spans 300 residues: uncharacterized protein (300 aa).

The disordered stretch occupies residues 230–251 (LRQSTSRQSISRQSISRQSTSR). Residues 231–251 (RQSTSRQSISRQSISRQSTSR) show a composition bias toward low complexity.

This is an uncharacterized protein from Acanthamoeba polyphaga (Amoeba).